The following is a 444-amino-acid chain: Acyl-CoA 6-desaturase (444 aa).

The Cytoplasmic segment spans residues 1–131; that stretch reads MGKGGNQGEG…DMNLFKTNHV (131 aa). Residues 18 to 95 form the Cytochrome b5 heme-binding domain; the sequence is VPTFSWEEIQ…LKPLLIGELA (78 aa). The helical transmembrane segment at 132-152 threads the bilayer; sequence FFLLLLAHIIALESIAWFTVF. The Lumenal portion of the chain corresponds to 153–157; that stretch reads YFGNG. The chain crosses the membrane as a helical span at residues 158–178; sequence WISTLITAFVLATSQAQAGWL. Residues 179-264 are Cytoplasmic-facing; that stretch reads QHDYGHLSVY…KYLPYNHQHE (86 aa). The short motif at 180–184 is the Histidine box-1 element; the sequence is HDYGH. A Histidine box-2 motif is present at residues 217 to 221; it reads HFQHH. The chain crosses the membrane as a helical span at residues 265-285; that stretch reads YFFLIGPPLLIPMYFQYQIIM. Residues 286–305 lie on the Lumenal side of the membrane; sequence TMIVHKNWVDLAWAISYYIR. Residues 306–326 form a helical membrane-spanning segment; that stretch reads FFITYIPFYGILGALLFLNFI. Topologically, residues 327–444 are cytoplasmic; the sequence is RFLESHWFVW…KLWLDAYLHK (118 aa). The short motif at 382-386 is the Histidine box-3 element; sequence QIEHH.

Belongs to the fatty acid desaturase type 1 family.

Its subcellular location is the endoplasmic reticulum membrane. The catalysed reaction is (9Z,12Z)-octadecadienoyl-CoA + 2 Fe(II)-[cytochrome b5] + O2 + 2 H(+) = (6Z,9Z,12Z)-octadecatrienoyl-CoA + 2 Fe(III)-[cytochrome b5] + 2 H2O. It catalyses the reaction (9Z,12Z,15Z)-octadecatrienoyl-CoA + 2 Fe(II)-[cytochrome b5] + O2 + 2 H(+) = (6Z,9Z,12Z,15Z)-octadecatetraenoyl-CoA + 2 Fe(III)-[cytochrome b5] + 2 H2O. It carries out the reaction (9Z,12Z,15Z,18Z,21Z)-tetracosapentaenoyl-CoA + 2 Fe(II)-[cytochrome b5] + O2 + 2 H(+) = (6Z,9Z,12Z,15Z,18Z,21Z)-tetracosahexaenoyl-CoA + 2 Fe(III)-[cytochrome b5] + 2 H2O. The enzyme catalyses (11E)-octadecenoyl-CoA + 2 Fe(II)-[cytochrome b5] + O2 + 2 H(+) = (6Z,11E)-octadecadienoyl-CoA + 2 Fe(III)-[cytochrome b5] + 2 H2O. The catalysed reaction is (11Z,14Z)-eicosadienoyl-CoA + 2 Fe(II)-[cytochrome b5] + O2 + 2 H(+) = (8Z,11Z,14Z)-eicosatrienoyl-CoA + 2 Fe(III)-[cytochrome b5] + 2 H2O. It catalyses the reaction (11Z,14Z,17Z)-eicosatrienoyl-CoA + 2 Fe(II)-[cytochrome b5] + O2 + 2 H(+) = (8Z,11Z,14Z,17Z)-eicosatetraenoyl-CoA + 2 Fe(III)-[cytochrome b5] + 2 H2O. The protein operates within lipid metabolism; polyunsaturated fatty acid biosynthesis. In terms of biological role, involved in the biosynthesis of highly unsaturated fatty acids (HUFA) from the essential polyunsaturated fatty acids (PUFA) linoleic acid (LA) (18:2n-6) and alpha-linolenic acid (ALA) (18:3n-3) precursors, acting as a fatty acyl-coenzyme A (CoA) desaturase that introduces a cis double bond at carbon 6 of the fatty acyl chain. Catalyzes the first and rate limiting step in this pathway which is the desaturation of LA (18:2n-6) and ALA (18:3n-3) into gamma-linoleate (GLA) (18:3n-6) and stearidonate (18:4n-3), respectively. Subsequently, in the biosynthetic pathway of HUFA n-3 series, it desaturates tetracosapentaenoate (24:5n-3) to tetracosahexaenoate (24:6n-3), which is then converted to docosahexaenoate (DHA)(22:6n-3), an important lipid for nervous system function. It can also desaturate (11E)-octadecenoate (trans-vaccenoate) at carbon 6 generating (6Z,11E)-octadecadienoate. In addition to Delta-6 activity, this enzyme exhibits Delta-8 activity with slight biases toward n-3 fatty acyl-CoA substrates. The sequence is that of Acyl-CoA 6-desaturase (FADS2) from Pongo abelii (Sumatran orangutan).